A 407-amino-acid chain; its full sequence is Serine/threonine transporter SstT (407 aa).

Helical transmembrane passes span 12 to 32, 42 to 62, 81 to 101, 141 to 161, 179 to 199, 218 to 238, 245 to 267, 288 to 308, and 330 to 350; these read GNLIVQICIGIVLGILIGISS, LGILFTSALKAIAPMLVFILI, IIILYIVGTFLASACAVLANF, ALSSGNYLGILTWAIAGGIAL, VLKIVKFIVKLAPFGIFGLVA, ILLVTTMLFVTFVINALIVFF, FPLIFICLRHSAFFAFFTRSSAA, ISIPLGATINMAGAAVTIAIL, and IIATFAACGASGVAGGSLLLI.

Belongs to the dicarboxylate/amino acid:cation symporter (DAACS) (TC 2.A.23) family.

The protein localises to the cell inner membrane. It carries out the reaction L-serine(in) + Na(+)(in) = L-serine(out) + Na(+)(out). It catalyses the reaction L-threonine(in) + Na(+)(in) = L-threonine(out) + Na(+)(out). In terms of biological role, involved in the import of serine and threonine into the cell, with the concomitant import of sodium (symport system). The sequence is that of Serine/threonine transporter SstT from Campylobacter jejuni subsp. jejuni serotype O:6 (strain 81116 / NCTC 11828).